Here is a 46-residue protein sequence, read N- to C-terminus: DNA-directed RNA polymerases I, II, and III subunit rpabc4 (46 aa).

Zn(2+)-binding residues include C7, C10, C24, and C27. The C4-type zinc finger occupies 7–27 (CGECGAEHEIKPKEPVKCKDC).

This sequence belongs to the archaeal Rpo12/eukaryotic RPC10 RNA polymerase subunit family. Component of the RNA polymerase I (Pol I), RNA polymerase II (Pol II) and RNA polymerase III (Pol III) complexes consisting of at least 13, 12 and 17 subunits, respectively.

It is found in the nucleus. Its function is as follows. DNA-dependent RNA polymerase catalyzes the transcription of DNA into RNA using the four ribonucleoside triphosphates as substrates. Common component of RNA polymerases I, II and III which synthesize ribosomal RNA precursors, mRNA precursors and many functional non-coding RNAs, and a small RNAs, such as 5S rRNA and tRNAs, respectively. The polypeptide is DNA-directed RNA polymerases I, II, and III subunit rpabc4 (polr2k) (Dictyostelium discoideum (Social amoeba)).